Here is an 876-residue protein sequence, read N- to C-terminus: Leucine--tRNA ligase (876 aa).

Residues 43-53 carry the 'HIGH' region motif; sequence PYPSGRIHMGH. The 'KMSKS' region signature appears at 632 to 636; the sequence is KMSKS. An ATP-binding site is contributed by Lys635.

The protein belongs to the class-I aminoacyl-tRNA synthetase family.

The protein localises to the cytoplasm. The catalysed reaction is tRNA(Leu) + L-leucine + ATP = L-leucyl-tRNA(Leu) + AMP + diphosphate. The chain is Leucine--tRNA ligase from Rhizobium etli (strain ATCC 51251 / DSM 11541 / JCM 21823 / NBRC 15573 / CFN 42).